The primary structure comprises 311 residues: Putative F-box protein At3g28280 (311 aa).

In terms of domain architecture, F-box spans M1 to L43.

The protein is Putative F-box protein At3g28280 of Arabidopsis thaliana (Mouse-ear cress).